The following is a 402-amino-acid chain: DNA primase DnaG (402 aa).

Residues 165 to 243 (PNLIIVEGRA…KIDFVARAPV (79 aa)) enclose the Toprim domain. Residues Glu171, Asp216, and Asp218 each contribute to the Mg(2+) site.

The protein belongs to the archaeal DnaG primase family. In terms of assembly, forms a ternary complex with MCM helicase and DNA. Component of the archaeal exosome complex. It depends on Mg(2+) as a cofactor.

The catalysed reaction is ssDNA + n NTP = ssDNA/pppN(pN)n-1 hybrid + (n-1) diphosphate.. Functionally, RNA polymerase that catalyzes the synthesis of short RNA molecules used as primers for DNA polymerase during DNA replication. Also part of the exosome, which is a complex involved in RNA degradation. Acts as a poly(A)-binding protein that enhances the interaction between heteromeric, adenine-rich transcripts and the exosome. In Saccharolobus islandicus (strain Y.N.15.51 / Yellowstone #2) (Sulfolobus islandicus), this protein is DNA primase DnaG.